The chain runs to 277 residues: GATA transcription factor 15 (277 aa).

The tract at residues 52 to 94 (AYDDHSTVTTSPSSPSSSSTGSVDCTLSLGTPSSRRAEPVAAA) is disordered. Over residues 58-74 (TVTTSPSSPSSSSTGSV) the composition is skewed to low complexity. Residues 154-179 (CANCGTASTPLWRNGPRGPKSLCNAC) form a GATA-type zinc finger.

Belongs to the type IV zinc-finger family. Class B subfamily.

Probable transcription factor that regulates organogenesis during transition from the vegetative to the reproductive phase. Regulates the expression of CYP78A11/PLA1, HD3A and MADS1 during reproductive development in rice. May act upstream of CYP78A11/PLA1 during panicle development. Acts independently of the photoperiodic and gibberellin signaling pathways. The polypeptide is GATA transcription factor 15 (Oryza sativa subsp. indica (Rice)).